The chain runs to 239 residues: Ribonuclease PH (239 aa).

Phosphate is bound by residues R87 and 125 to 127 (GTR).

The protein belongs to the RNase PH family. As to quaternary structure, homohexameric ring arranged as a trimer of dimers.

It catalyses the reaction tRNA(n+1) + phosphate = tRNA(n) + a ribonucleoside 5'-diphosphate. Functionally, phosphorolytic 3'-5' exoribonuclease that plays an important role in tRNA 3'-end maturation. Removes nucleotide residues following the 3'-CCA terminus of tRNAs; can also add nucleotides to the ends of RNA molecules by using nucleoside diphosphates as substrates, but this may not be physiologically important. Probably plays a role in initiation of 16S rRNA degradation (leading to ribosome degradation) during starvation. The polypeptide is Ribonuclease PH (Saccharophagus degradans (strain 2-40 / ATCC 43961 / DSM 17024)).